We begin with the raw amino-acid sequence, 142 residues long: UPF0179 protein PYRAB06360 (142 aa).

The protein belongs to the UPF0179 family.

In Pyrococcus abyssi (strain GE5 / Orsay), this protein is UPF0179 protein PYRAB06360.